We begin with the raw amino-acid sequence, 289 residues long: DegV domain-containing protein YteA (289 aa).

One can recognise a DegV domain in the interval 3-284; it reads FQIMTDSTAD…DGTIAIFSIS (282 aa). Hexadecanoate-binding residues include Thr62 and Ser94.

In terms of biological role, may bind long-chain fatty acids, such as palmitate, and may play a role in lipid transport or fatty acid metabolism. The protein is DegV domain-containing protein YteA (yteA) of Lactococcus lactis subsp. lactis (strain IL1403) (Streptococcus lactis).